Here is a 629-residue protein sequence, read N- to C-terminus: tRNA uridine 5-carboxymethylaminomethyl modification enzyme MnmG (629 aa).

13-18 provides a ligand contact to FAD; it reads GGGHAG. 273–287 serves as a coordination point for NAD(+); that stretch reads GPRYCPSIEDKIHRF.

Belongs to the MnmG family. Homodimer. Heterotetramer of two MnmE and two MnmG subunits. FAD serves as cofactor.

It localises to the cytoplasm. Its function is as follows. NAD-binding protein involved in the addition of a carboxymethylaminomethyl (cmnm) group at the wobble position (U34) of certain tRNAs, forming tRNA-cmnm(5)s(2)U34. The polypeptide is tRNA uridine 5-carboxymethylaminomethyl modification enzyme MnmG (Shewanella baltica (strain OS155 / ATCC BAA-1091)).